Consider the following 535-residue polypeptide: Bifunctional purine biosynthesis protein PurH (535 aa).

One can recognise an MGS-like domain in the interval 6–151 (TRLPVRRALI…KNHKDVAIVV (146 aa)).

This sequence belongs to the PurH family.

It carries out the reaction (6R)-10-formyltetrahydrofolate + 5-amino-1-(5-phospho-beta-D-ribosyl)imidazole-4-carboxamide = 5-formamido-1-(5-phospho-D-ribosyl)imidazole-4-carboxamide + (6S)-5,6,7,8-tetrahydrofolate. The catalysed reaction is IMP + H2O = 5-formamido-1-(5-phospho-D-ribosyl)imidazole-4-carboxamide. Its pathway is purine metabolism; IMP biosynthesis via de novo pathway; 5-formamido-1-(5-phospho-D-ribosyl)imidazole-4-carboxamide from 5-amino-1-(5-phospho-D-ribosyl)imidazole-4-carboxamide (10-formyl THF route): step 1/1. It functions in the pathway purine metabolism; IMP biosynthesis via de novo pathway; IMP from 5-formamido-1-(5-phospho-D-ribosyl)imidazole-4-carboxamide: step 1/1. This Pseudomonas putida (strain GB-1) protein is Bifunctional purine biosynthesis protein PurH.